The sequence spans 3916 residues: Fusarin C synthetase (3916 aa).

The Ketosynthase family 3 (KS3) domain maps to 9–440 (KEPIAIIGTS…GTNVHAIIEQ (432 aa)). Catalysis depends on for beta-ketoacyl synthase activity residues Cys182, His319, and His360. The segment at 548 to 869 (VFTGQGAQWP…VTRNIHDVEA (322 aa)) is malonyl-CoA:ACP transacylase (MAT) domain. The N-terminal hotdog fold stretch occupies residues 935 to 1068 (HPLLGARSVE…GQLRVEFSSL (134 aa)). The tract at residues 935–1228 (HPLLGARSVE…GLTCTSLLRP (294 aa)) is dehydratase (DH) domain. Positions 935–1231 (HPLLGARSVE…CTSLLRPGPS (297 aa)) constitute a PKS/mFAS DH domain. His967 serves as the catalytic Proton acceptor; for dehydratase activity. Positions 1084-1231 (LTSVDMERFY…CTSLLRPGPS (148 aa)) are C-terminal hotdog fold. The active-site Proton donor; for dehydratase activity is Asp1141. The segment at 1350–1584 (VGENLPAVVR…YMTSVMLSQA (235 aa)) is C-methyltransferase (CMeT) domain. The interval 2092–2266 (TYLLIGFTGG…AASVMHIGMV (175 aa)) is ketoreductase (KR) domain 1. One can recognise a Carrier 1 domain in the interval 2372–2449 (EILAVVEEEF…ELCSTVVSHL (78 aa)). An O-(pantetheine 4'-phosphoryl)serine modification is found at Ser2409. The segment at 2482-2511 (ASPTENEPFTIRNSPNSTQVTSESGVDEET) is disordered. A compositionally biased stretch (polar residues) spans 2486-2505 (ENEPFTIRNSPNSTQVTSES). The interval 2522–2806 (PLSFAQERLW…VNLLPLRLKL (285 aa)) is condensation. The tract at residues 2973–3385 (FEKCVVNQPD…RIAGDSQIKL (413 aa)) is adenylation. Residues 3493–3570 (KPLTETQERL…EMAAKIDGFT (78 aa)) enclose the Carrier 2 domain. Ser3530 is modified (O-(pantetheine 4'-phosphoryl)serine). Positions 3612–3833 (LTGATGFLGV…DFVPVDVVAA (222 aa)) are thiolester reductase (R) domain.

The protein in the C-terminal section; belongs to the NRP synthetase family.

Its pathway is mycotoxin biosynthesis. In terms of biological role, fusarin C synthetase; part of the gene cluster that mediates the biosynthesis of the mycotoxin fusarin C. Within the cluster, FUS1, FUS2, FUS8 and FUS9 are sufficient for fusarin production. The roles of the other FUS members are yet undetermined. The fusarin C synthetase FUS1 is responsible for the condensation of one acetyl-coenzyme A (CoA) unit with six malonyl-CoA units and the amide linkage of the arising heptaketide and homoserine, subsequently releasing the first intermediate, prefusarin, as an alcohol with an open ring structure. The cytochrome P450 monooxygenase FUS8 participates in multiple oxidation processes at carbon C-20 and is able to use the FUS1 product as substrate, resulting in formation of 20-hydroxy-prefusarin. This reaction seems to be essential before the 2-pyrrolidone ring closure can be catalyzed by FUS2, generating 20-hydroxy-fusarin. FUS8 is able to further oxidizes carbon C-20 after ring closure, resulting in the formation of carboxy-fusarin C. As the last step, FUS9 methylates the hydroxyl group at C-21 to generate fusarin C. Fusarin C can then rearrange to epi-fusarin C, the (z)-isomers, and fusarin A and fusarin D. This is Fusarin C synthetase from Gibberella moniliformis (strain M3125 / FGSC 7600) (Maize ear and stalk rot fungus).